The chain runs to 152 residues: Small ribosomal subunit protein uS13 (152 aa).

The protein belongs to the universal ribosomal protein uS13 family.

The protein resides in the cytoplasm. Functionally, located at the top of the head of the 40S subunit, it contacts several helices of the 18S rRNA. The polypeptide is Small ribosomal subunit protein uS13 (RPS18) (Branchiostoma belcheri (Amphioxus)).